Here is an 84-residue protein sequence, read N- to C-terminus: Small ribosomal subunit protein bS16 (84 aa).

Belongs to the bacterial ribosomal protein bS16 family.

The polypeptide is Small ribosomal subunit protein bS16 (Burkholderia mallei (strain NCTC 10247)).